The chain runs to 81 residues: Acyl carrier protein (81 aa).

In terms of domain architecture, Carrier spans 2 to 80; sequence ASKEEILAGL…DAVDFIDGAQ (79 aa). An O-(pantetheine 4'-phosphoryl)serine modification is found at Ser40.

This sequence belongs to the acyl carrier protein (ACP) family. In terms of processing, 4'-phosphopantetheine is transferred from CoA to a specific serine of apo-ACP by AcpS. This modification is essential for activity because fatty acids are bound in thioester linkage to the sulfhydryl of the prosthetic group.

It localises to the cytoplasm. It functions in the pathway lipid metabolism; fatty acid biosynthesis. Functionally, carrier of the growing fatty acid chain in fatty acid biosynthesis. The chain is Acyl carrier protein from Micrococcus luteus (strain ATCC 4698 / DSM 20030 / JCM 1464 / CCM 169 / CCUG 5858 / IAM 1056 / NBRC 3333 / NCIMB 9278 / NCTC 2665 / VKM Ac-2230) (Micrococcus lysodeikticus).